The sequence spans 85 residues: Small protein YqaH (85 aa).

In terms of assembly, interacts with domain IV of DnaA and with Spo0A.

In terms of biological role, binds to and counteracts DnaA replication initiation activity; overexpression decreases the number of replication initiation events. Also antagonizes DnaA's transcriptional regulation activity. Ectopic expression during exponential phase stops cell growth 2 hours after induction, leading to filamentation, aberrant chromosome segregation and septoid-trapped nucleoids. Overexpression during sporulation onset leads to dramatic reductions in spore formation. The protein is Small protein YqaH (yqaH) of Bacillus subtilis (strain 168).